We begin with the raw amino-acid sequence, 589 residues long: Transmembrane 9 superfamily member 3 (589 aa).

The first 28 residues, 1 to 28 (MRPLPGALGVAAAAALWLLLLLLPRTRA), serve as a signal peptide directing secretion. The N-linked (GlcNAc...) asparagine glycan is linked to asparagine 174. The next 5 helical transmembrane spans lie at 224–244 (FSIFNSFMMVIFLVGLVSMIL), 294–314 (LIGSGCQIFAVSLIVIIVAMI), 328–348 (AIFVYAATSPVNGYFGGSLYA), 360–380 (FIGAFLIPAMVCGTAFFINFI), and 389–409 (AIPFGTMVAVCCICFFVILPL). Asparagine 419 carries N-linked (GlcNAc...) asparagine glycosylation. 4 helical membrane-spanning segments follow: residues 449 to 469 (IVCLGGILPFGSIFIEMYFIF), 482 to 502 (GFMMLVLVILCIVTVCVTIVC), 519 to 539 (FLSAASTAIYVYMYSFYYYFF), and 551 to 571 (FYFGYMAVFSTALGIMCGAIG).

It belongs to the nonaspanin (TM9SF) (TC 9.A.2) family.

It localises to the membrane. This Homo sapiens (Human) protein is Transmembrane 9 superfamily member 3 (TM9SF3).